We begin with the raw amino-acid sequence, 158 residues long: Small ribosomal subunit protein uS9 (158 aa).

The segment at 1 to 20 (MTEAVETETVEPTTDEATAA) is disordered. Positions 10–20 (VEPTTDEATAA) are enriched in low complexity.

Belongs to the universal ribosomal protein uS9 family.

The protein is Small ribosomal subunit protein uS9 of Mycobacterium sp. (strain JLS).